A 74-amino-acid chain; its full sequence is Small ribosomal subunit protein eS28 (74 aa).

It belongs to the eukaryotic ribosomal protein eS28 family.

The polypeptide is Small ribosomal subunit protein eS28 (Halorubrum lacusprofundi (strain ATCC 49239 / DSM 5036 / JCM 8891 / ACAM 34)).